The primary structure comprises 341 residues: Foldase protein PrsA (341 aa).

The first 22 residues, 1–22 (MKNIGRLAVTALIAVFIFSVTG), serve as a signal peptide directing secretion. A lipid anchor (N-palmitoyl cysteine) is attached at Cys23. The S-diacylglycerol cysteine moiety is linked to residue Cys23. One can recognise a PpiC domain in the interval 199–291 (PNKMHLAHIL…FGYHIIKCIK (93 aa)).

The protein belongs to the PrsA family.

It is found in the cell membrane. The enzyme catalyses [protein]-peptidylproline (omega=180) = [protein]-peptidylproline (omega=0). Plays a major role in protein secretion by helping the post-translocational extracellular folding of several secreted proteins. The polypeptide is Foldase protein PrsA (Clostridium kluyveri (strain NBRC 12016)).